A 190-amino-acid polypeptide reads, in one-letter code: Probable nicotinate-nucleotide adenylyltransferase (190 aa).

The protein belongs to the NadD family.

It carries out the reaction nicotinate beta-D-ribonucleotide + ATP + H(+) = deamido-NAD(+) + diphosphate. It participates in cofactor biosynthesis; NAD(+) biosynthesis; deamido-NAD(+) from nicotinate D-ribonucleotide: step 1/1. In terms of biological role, catalyzes the reversible adenylation of nicotinate mononucleotide (NaMN) to nicotinic acid adenine dinucleotide (NaAD). This is Probable nicotinate-nucleotide adenylyltransferase from Frankia alni (strain DSM 45986 / CECT 9034 / ACN14a).